Consider the following 335-residue polypeptide: Gibberellin 2-beta-dioxygenase 3 (335 aa).

The Fe2OG dioxygenase domain occupies 175 to 278 (ESDSCLRMNH…RISMIYFAGP (104 aa)). Histidine 202, aspartate 204, and histidine 259 together coordinate Fe cation. Residue arginine 269 is part of the active site.

The protein belongs to the iron/ascorbate-dependent oxidoreductase family. GA2OX subfamily. Fe(2+) is required as a cofactor. As to expression, not expressed in the apex.

It carries out the reaction gibberellin A1 + 2-oxoglutarate + O2 = gibberellin A8 + succinate + CO2. It functions in the pathway plant hormone biosynthesis; gibberellin biosynthesis. Functionally, catalyzes the 2-beta-hydroxylation of several biologically active gibberellins, leading to the homeostatic regulation of their endogenous level. Catabolism of gibberellins (GAs) plays a central role in plant development. Converts GA9/GA20 to GA51/GA29 and GA4/GA1 to GA34/GA8. This is Gibberellin 2-beta-dioxygenase 3 (GA2OX3) from Arabidopsis thaliana (Mouse-ear cress).